A 90-amino-acid polypeptide reads, in one-letter code: Probable Fe(2+)-trafficking protein (90 aa).

It belongs to the Fe(2+)-trafficking protein family. In terms of assembly, monomer.

In terms of biological role, could be a mediator in iron transactions between iron acquisition and iron-requiring processes, such as synthesis and/or repair of Fe-S clusters in biosynthetic enzymes. The protein is Probable Fe(2+)-trafficking protein of Edwardsiella ictaluri (strain 93-146).